The chain runs to 691 residues: DNA ligase (691 aa).

NAD(+)-binding positions include 41 to 45, 90 to 91, and Glu-130; these read DAEYD and SL. Residue Lys-132 is the N6-AMP-lysine intermediate of the active site. NAD(+) is bound by residues Arg-153, Glu-190, Lys-307, and Lys-331. Zn(2+) is bound by residues Cys-425, Cys-428, Cys-443, and Cys-449. Residues 610-691 enclose the BRCT domain; it reads APQGVLAGKT…LHQLLEGNTQ (82 aa).

This sequence belongs to the NAD-dependent DNA ligase family. LigA subfamily. Requires Mg(2+) as cofactor. The cofactor is Mn(2+).

The enzyme catalyses NAD(+) + (deoxyribonucleotide)n-3'-hydroxyl + 5'-phospho-(deoxyribonucleotide)m = (deoxyribonucleotide)n+m + AMP + beta-nicotinamide D-nucleotide.. Its function is as follows. DNA ligase that catalyzes the formation of phosphodiester linkages between 5'-phosphoryl and 3'-hydroxyl groups in double-stranded DNA using NAD as a coenzyme and as the energy source for the reaction. It is essential for DNA replication and repair of damaged DNA. This Burkholderia vietnamiensis (strain G4 / LMG 22486) (Burkholderia cepacia (strain R1808)) protein is DNA ligase.